Reading from the N-terminus, the 254-residue chain is Thiazole synthase (254 aa).

Lys-95 (schiff-base intermediate with DXP) is an active-site residue. Residues Gly-156, 182 to 183, and 204 to 205 contribute to the 1-deoxy-D-xylulose 5-phosphate site; these read AG and NT.

The protein belongs to the ThiG family. As to quaternary structure, homotetramer. Forms heterodimers with either ThiH or ThiS.

Its subcellular location is the cytoplasm. It catalyses the reaction [ThiS sulfur-carrier protein]-C-terminal-Gly-aminoethanethioate + 2-iminoacetate + 1-deoxy-D-xylulose 5-phosphate = [ThiS sulfur-carrier protein]-C-terminal Gly-Gly + 2-[(2R,5Z)-2-carboxy-4-methylthiazol-5(2H)-ylidene]ethyl phosphate + 2 H2O + H(+). It functions in the pathway cofactor biosynthesis; thiamine diphosphate biosynthesis. Functionally, catalyzes the rearrangement of 1-deoxy-D-xylulose 5-phosphate (DXP) to produce the thiazole phosphate moiety of thiamine. Sulfur is provided by the thiocarboxylate moiety of the carrier protein ThiS. In vitro, sulfur can be provided by H(2)S. The chain is Thiazole synthase from Shewanella baltica (strain OS223).